The primary structure comprises 927 residues: Sodium/calcium exchanger 3 (927 aa).

The signal sequence occupies residues 1–30 (MAWLRLQPLTSAFLHFGLVTFVLFLNGLRA). The Extracellular portion of the chain corresponds to 31-73 (EAGDLRDVPSAGQNNESCSGSSDCKEGVILPIWYPENPSLGDK). The N-linked (GlcNAc...) asparagine glycan is linked to Asn-45. The helical transmembrane segment at 74-94 (IARVIVYFVALIYMFLGVSII) threads the bilayer. Topologically, residues 95 to 147 (ADRFMASIEVITSQEREVTIKKPNGETSTTTIRVWNETVSNLTLMALGSSAPE) are cytoplasmic. The Alpha-1 repeat unit spans residues 140–180 (ALGSSAPEILLSLIEVCGHGFIAGDLGPSTIVGSAAFNMFI). A helical membrane pass occupies residues 148–168 (ILLSLIEVCGHGFIAGDLGPS). Position 169 (Thr-169) is a topological domain, extracellular. The helical transmembrane segment at 170-190 (IVGSAAFNMFIIIGICVYVIP) threads the bilayer. At 191 to 202 (DGETRKIKHLRV) the chain is on the cytoplasmic side. The helical transmembrane segment at 203-223 (FFVTAAWSVFAYIWLYMILAV) threads the bilayer. Residues 224 to 230 (FSPGVVQ) are Extracellular-facing. Residues 231-251 (VWEGLLTLFFFPVCVLLAWVA) form a helical membrane-spanning segment. The Cytoplasmic portion of the chain corresponds to 252-726 (DKRLLFYKYM…DESGEERLPS (475 aa)). Residues 253 to 272 (KRLLFYKYMHKRYRTDKHRG) are putative calmodulin-binding region. 2 consecutive Calx-beta domains span residues 386 to 485 (VHTD…VRLS) and 519 to 619 (ATVT…IALG). Residues Glu-409, Asp-445, Asp-470, Asp-471, Ile-473, Glu-475, Glu-478, Asp-525, Asp-526, Asp-527, Glu-543, Asp-579, Glu-606, Glu-607, and Glu-672 each contribute to the Ca(2+) site. The helical transmembrane segment at 727-747 (CFDYVMHFLTVFWKVLFACVP) threads the bilayer. At 748–754 (PTEYCHG) the chain is on the extracellular side. Residues 755 to 775 (WACFVVSILIIGMLTAIIGDL) traverse the membrane as a helical segment. The Cytoplasmic portion of the chain corresponds to 776 to 778 (ASH). The chain crosses the membrane as a helical span at residues 779-799 (FGCTIGLKDSVTAVVFVAFGT). The Alpha-2 repeat unit spans residues 796-832 (AFGTSVPDTFASKAAALQDVYADASIGNVTGSNAVNV). Over 800–828 (SVPDTFASKAAALQDVYADASIGNVTGSN) the chain is Extracellular. The N-linked (GlcNAc...) asparagine glycan is linked to Asn-823. Residues 829-849 (AVNVFLGIGLAWSVAAIYWAM) traverse the membrane as a helical segment. The Cytoplasmic segment spans residues 850–860 (QGQEFHVSAGT). Residues 861–881 (LAFSVTLFTIFAFVCLSVLLY) traverse the membrane as a helical segment. Residues 882–903 (RRRPHLGGELGGPRGCKLATTW) are Extracellular-facing. A helical transmembrane segment spans residues 904-924 (LFVSLWLLYVLFATLEAYCYI). At 925 to 927 (KGF) the chain is on the cytoplasmic side.

The protein belongs to the Ca(2+):cation antiporter (CaCA) (TC 2.A.19) family. SLC8 subfamily. As to quaternary structure, interacts with AKAP1. Detected in neurons in brain cortex and hippocampus. Detected in pyramidal cell bodies and processes, in granule cells and interneurons in the CA1 and CA3 region of the hippocampus. Detected on astrocyte processes in brain cortex. Detected on endothelial cells in hippocampus capillaries (at protein level). Restricted to brain and skeletal muscle.

The protein resides in the cell membrane. It localises to the perikaryon. It is found in the cell projection. Its subcellular location is the dendrite. The protein localises to the dendritic spine. The protein resides in the sarcolemma. It localises to the cytoplasm. It is found in the sarcoplasm. Its subcellular location is the cell junction. The protein localises to the mitochondrion outer membrane. The protein resides in the endoplasmic reticulum membrane. It localises to the perinuclear region. It carries out the reaction Ca(2+)(in) + 3 Na(+)(out) = Ca(2+)(out) + 3 Na(+)(in). With respect to regulation, calcium transport is down-regulated by Na(+) and stimulated by Ca(2+). Functionally, mediates the electrogenic exchange of Ca(2+) against Na(+) ions across the cell membrane, and thereby contributes to the regulation of cytoplasmic Ca(2+) levels and Ca(2+)-dependent cellular processes. Contributes to cellular Ca(2+) homeostasis in excitable cells, both in muscle and in brain. In a first phase, voltage-gated channels mediate the rapid increase of cytoplasmic Ca(2+) levels due to release of Ca(2+) stores from the endoplasmic reticulum. SLC8A3 mediates the export of Ca(2+) from the cell during the next phase, so that cytoplasmic Ca(2+) levels rapidly return to baseline. Contributes to Ca(2+) transport during excitation-contraction coupling in muscle. In neurons, contributes to the rapid decrease of cytoplasmic Ca(2+) levels back to baseline after neuronal activation, and thereby contributes to modulate synaptic plasticity, learning and memory. Required for normal oligodendrocyte differentiation and for normal myelination. Mediates Ca(2+) efflux from mitochondria and contributes to mitochondrial Ca(2+) ion homeostasis. This is Sodium/calcium exchanger 3 (Slc8a3) from Rattus norvegicus (Rat).